The sequence spans 554 residues: Guanine nucleotide-binding protein alpha-2 subunit (554 aa).

Disordered regions lie at residues 1-139 (MGLC…NNSN) and 157-183 (VNGNSTNSDKALSNQFDQSNNSETHSG). Residue Gly2 is the site of N-myristoyl glycine attachment. Cys4 is lipidated: S-palmitoyl cysteine. Composition is skewed to basic and acidic residues over residues 7-17 (KDSRESTHDGG) and 28-43 (ANRRNDVRKGAGDKKQ). The segment covering 52 to 66 (GSIVNAASNINNSSS) has biased composition (low complexity). Residues 67–85 (GKTKISTVSEDGTVSNGVG) show a composition bias toward polar residues. The segment covering 91-139 (DNANNKNNGNNNNSNNNDNNNNNNNNIGNNINGNNNNDSENIHDSNNSN) has biased composition (low complexity). Positions 228 to 554 (NALKVLLLGS…ENSLKDSGVL (327 aa)) constitute a G-alpha domain. Residues 231 to 244 (KVLLLGSGESGKST) are G1 motif. Positions 239, 240, 241, 242, 243, 244, 351, 376, 382, 405, 471, 472, 474, and 526 each coordinate GTP. Ser243 lines the Mg(2+) pocket. A G2 motif region spans residues 374–382 (DVIRTRKKT). Thr382 serves as a coordination point for Mg(2+). Positions 398-407 (LHFFDVGGQR) are G3 motif. Residues 467–474 (VLFLNKID) form a G4 motif region. A G5 motif region spans residues 524–529 (TQATDT).

It belongs to the G-alpha family. As to quaternary structure, g proteins are composed of 3 units; alpha, beta and gamma. The alpha chain contains the guanine nucleotide binding site. It depends on Mg(2+) as a cofactor.

In terms of biological role, guanine nucleotide-binding proteins (G proteins) are involved as modulators or transducers in various transmembrane signaling systems. This protein may be involved in the determination of the cAMP level according to nutritional conditions, most probably as a regulator of adenylyl cyclase. This Kluyveromyces lactis (strain ATCC 8585 / CBS 2359 / DSM 70799 / NBRC 1267 / NRRL Y-1140 / WM37) (Yeast) protein is Guanine nucleotide-binding protein alpha-2 subunit (GPA2).